The primary structure comprises 215 residues: Porin MspB (215 aa).

An N-terminal signal peptide occupies residues 1–31 (MTAFKRVLIAMISALLAGTTGMFVSAGAAHA).

It belongs to the mycobacterial porin (TC 1.B.24) family. As to quaternary structure, octamers. Probably forms a goblet with the wide end on the exterior of the outer membrane and a central channel. It is not known if mixed oligomers of MspB with other Msp subunits form in vivo.

The protein localises to the cell outer membrane. Its subcellular location is the secreted. It is found in the cell wall. Functionally, a backup porin induced when MspA, the major porin, is deleted. Probably forms a water-filled channel which favors the permeation of cations. There are about 2400 porins in wild-type, 800 in an mspA deletion and 150 in a double mspA-mspC deletion. A triple mspA-mspC-mspD deletion mutant has low but detectable channel activity. Different conductance values with maxima at 2.3 and 4.6 nanosiemens might be caused by a simultaneous reconstitution of MspB channels into the membrane or by the existence of different MspB conformations. This Mycolicibacterium smegmatis (strain ATCC 700084 / mc(2)155) (Mycobacterium smegmatis) protein is Porin MspB (mspB).